The chain runs to 397 residues: Methylthioribose kinase (397 aa).

Residues Asn-44, Lys-61, and 115–117 (EDL) each bind ATP. Asp-233 is a substrate binding site. Position 250-252 (250-252 (DPE)) interacts with ATP. Substrate is bound at residue Arg-340.

This sequence belongs to the methylthioribose kinase family. Homodimer.

It catalyses the reaction 5-(methylsulfanyl)-D-ribose + ATP = 5-(methylsulfanyl)-alpha-D-ribose 1-phosphate + ADP + H(+). Its pathway is amino-acid biosynthesis; L-methionine biosynthesis via salvage pathway; S-methyl-5-thio-alpha-D-ribose 1-phosphate from S-methyl-5'-thioadenosine (hydrolase route): step 2/2. Its function is as follows. Catalyzes the phosphorylation of methylthioribose into methylthioribose-1-phosphate. This is Methylthioribose kinase (mtnK) from Bacillus subtilis (strain 168).